The primary structure comprises 242 residues: Probable transcriptional regulatory protein BTH_I1015 (242 aa).

The protein belongs to the TACO1 family.

Its subcellular location is the cytoplasm. In Burkholderia thailandensis (strain ATCC 700388 / DSM 13276 / CCUG 48851 / CIP 106301 / E264), this protein is Probable transcriptional regulatory protein BTH_I1015.